A 336-amino-acid polypeptide reads, in one-letter code: Dihydroorotate dehydrogenase (quinone) (336 aa).

FMN contacts are provided by residues 62–66 and threonine 86; that span reads AGLDK. Lysine 66 serves as a coordination point for substrate. 111–115 is a binding site for substrate; it reads NRFGF. 2 residues coordinate FMN: asparagine 139 and asparagine 172. Residue asparagine 172 participates in substrate binding. Serine 175 acts as the Nucleophile in catalysis. Asparagine 177 is a binding site for substrate. Positions 217 and 245 each coordinate FMN. 246–247 is a binding site for substrate; it reads NT. FMN-binding positions include glycine 268, glycine 297, and 318–319; that span reads YS.

This sequence belongs to the dihydroorotate dehydrogenase family. Type 2 subfamily. Monomer. It depends on FMN as a cofactor.

It localises to the cell membrane. It carries out the reaction (S)-dihydroorotate + a quinone = orotate + a quinol. It participates in pyrimidine metabolism; UMP biosynthesis via de novo pathway; orotate from (S)-dihydroorotate (quinone route): step 1/1. Catalyzes the conversion of dihydroorotate to orotate with quinone as electron acceptor. The sequence is that of Dihydroorotate dehydrogenase (quinone) from Photobacterium profundum (strain SS9).